We begin with the raw amino-acid sequence, 125 residues long: Histone H1-like protein Hc1 (125 aa).

Residues Thr98–Lys125 form a disordered region. A compositionally biased stretch (basic residues) spans Ala100–Lys125.

It belongs to the histone H1/H5 family. HCT subfamily.

Functionally, might have a role analogous to that of eukaryotic histone proteins. This Chlamydia trachomatis serovar L2 (strain ATCC VR-902B / DSM 19102 / 434/Bu) protein is Histone H1-like protein Hc1 (hctA).